Consider the following 513-residue polypeptide: ATP synthase subunit alpha (513 aa).

169 to 176 is an ATP binding site; the sequence is GDRQCGKT.

This sequence belongs to the ATPase alpha/beta chains family. As to quaternary structure, F-type ATPases have 2 components, CF(1) - the catalytic core - and CF(0) - the membrane proton channel. CF(1) has five subunits: alpha(3), beta(3), gamma(1), delta(1), epsilon(1). CF(0) has three main subunits: a(1), b(2) and c(9-12). The alpha and beta chains form an alternating ring which encloses part of the gamma chain. CF(1) is attached to CF(0) by a central stalk formed by the gamma and epsilon chains, while a peripheral stalk is formed by the delta and b chains.

The protein localises to the cell inner membrane. The catalysed reaction is ATP + H2O + 4 H(+)(in) = ADP + phosphate + 5 H(+)(out). In terms of biological role, produces ATP from ADP in the presence of a proton gradient across the membrane. The alpha chain is a regulatory subunit. The polypeptide is ATP synthase subunit alpha (Burkholderia cenocepacia (strain ATCC BAA-245 / DSM 16553 / LMG 16656 / NCTC 13227 / J2315 / CF5610) (Burkholderia cepacia (strain J2315))).